The following is a 129-amino-acid chain: Large ribosomal subunit protein bL19c (129 aa).

It belongs to the bacterial ribosomal protein bL19 family.

The protein resides in the plastid. This Prototheca wickerhamii protein is Large ribosomal subunit protein bL19c.